Here is a 328-residue protein sequence, read N- to C-terminus: Putative P2Y purinoceptor 10 (328 aa).

The Extracellular portion of the chain corresponds to 1–27 (MGSNSTSSAESNCNATYLPFQYSLYAT). 2 N-linked (GlcNAc...) asparagine glycosylation sites follow: asparagine 4 and asparagine 14. A helical transmembrane segment spans residues 28 to 48 (TYIFIFIPGLLANSAALWVLC). Over 49–56 (RFISKKNK) the chain is Cytoplasmic. A helical membrane pass occupies residues 57-77 (AIIFMINLSVADLAHILSLPL). Topologically, residues 78–91 (RIYYYINRHWPFQR) are extracellular. The helical transmembrane segment at 92–112 (ALCLLCFYLKYLNMYASIFFL) threads the bilayer. Cysteine 94 and cysteine 170 are oxidised to a cystine. The Cytoplasmic portion of the chain corresponds to 113–137 (TCISLQRCLFLLKPFRARNWKRRYD). The chain crosses the membrane as a helical span at residues 138–158 (VGISAVIWIVVGTACLPFPIL). Over 159 to 182 (RNAGLANSTDSCFADLGYKQMDAV) the chain is Extracellular. The chain crosses the membrane as a helical span at residues 183–203 (VLVTMVVIAELAGFVIPVITI). The Cytoplasmic portion of the chain corresponds to 204-233 (ACCTWKTTVSLKHPPIAFQGISERKKALRM). Residues 234-254 (VFMCAAVFVICFTPYHINFIF) traverse the membrane as a helical segment. At 255–277 (YTMVKESIITSCPTVKSTLYFHP) the chain is on the extracellular side. A helical membrane pass occupies residues 278–298 (FSLCLASLCCLLDPILYYFMA). Over 299–328 (SEFRDQLSRHGSSVTRSRLMSRESGSSMVN) the chain is Cytoplasmic.

This sequence belongs to the G-protein coupled receptor 1 family.

The protein localises to the cell membrane. Putative receptor for purines coupled to G-proteins. The sequence is that of Putative P2Y purinoceptor 10 (P2ry10) from Mus musculus (Mouse).